Consider the following 238-residue polypeptide: Zinc import ATP-binding protein ZnuC (238 aa).

Positions 5–220 (IQLNNISVNF…SEFIAIFGNI (216 aa)) constitute an ABC transporter domain. Residue 37–44 (GPNGAGKS) coordinates ATP.

This sequence belongs to the ABC transporter superfamily. Zinc importer (TC 3.A.1.15.5) family. The complex is composed of two ATP-binding proteins (ZnuC), two transmembrane proteins (ZnuB) and a solute-binding protein (ZnuA).

Its subcellular location is the cell membrane. The enzyme catalyses Zn(2+)(out) + ATP(in) + H2O(in) = Zn(2+)(in) + ADP(in) + phosphate(in) + H(+)(in). Part of the ABC transporter complex ZnuABC involved in zinc import. Responsible for energy coupling to the transport system. This Buchnera aphidicola subsp. Baizongia pistaciae (strain Bp) protein is Zinc import ATP-binding protein ZnuC.